Reading from the N-terminus, the 243-residue chain is Ubiquinone/menaquinone biosynthesis C-methyltransferase UbiE (243 aa).

S-adenosyl-L-methionine is bound by residues threonine 69, aspartate 90, and 116-117; that span reads DA.

The protein belongs to the class I-like SAM-binding methyltransferase superfamily. MenG/UbiE family.

It carries out the reaction a 2-demethylmenaquinol + S-adenosyl-L-methionine = a menaquinol + S-adenosyl-L-homocysteine + H(+). The enzyme catalyses a 2-methoxy-6-(all-trans-polyprenyl)benzene-1,4-diol + S-adenosyl-L-methionine = a 5-methoxy-2-methyl-3-(all-trans-polyprenyl)benzene-1,4-diol + S-adenosyl-L-homocysteine + H(+). The protein operates within quinol/quinone metabolism; menaquinone biosynthesis; menaquinol from 1,4-dihydroxy-2-naphthoate: step 2/2. Its pathway is cofactor biosynthesis; ubiquinone biosynthesis. Methyltransferase required for the conversion of demethylmenaquinol (DMKH2) to menaquinol (MKH2) and the conversion of 2-polyprenyl-6-methoxy-1,4-benzoquinol (DDMQH2) to 2-polyprenyl-3-methyl-6-methoxy-1,4-benzoquinol (DMQH2). The sequence is that of Ubiquinone/menaquinone biosynthesis C-methyltransferase UbiE from Burkholderia cenocepacia (strain ATCC BAA-245 / DSM 16553 / LMG 16656 / NCTC 13227 / J2315 / CF5610) (Burkholderia cepacia (strain J2315)).